The following is a 166-amino-acid chain: Large ribosomal subunit protein uL10 (166 aa).

This sequence belongs to the universal ribosomal protein uL10 family. Part of the ribosomal stalk of the 50S ribosomal subunit. The N-terminus interacts with L11 and the large rRNA to form the base of the stalk. The C-terminus forms an elongated spine to which L12 dimers bind in a sequential fashion forming a multimeric L10(L12)X complex.

Its function is as follows. Forms part of the ribosomal stalk, playing a central role in the interaction of the ribosome with GTP-bound translation factors. The protein is Large ribosomal subunit protein uL10 of Stutzerimonas stutzeri (strain A1501) (Pseudomonas stutzeri).